The sequence spans 570 residues: MSKSRRVFLSMQGDDDFWGNGDRFEEHKLSKMNRRKCRGMMDTAKDDVLDEHFFKQNNLVTQELEQQNAKSNDMFRERQDWNSSTPLEKINLVESEDPVTCPENTEAKIHCSEVKVTEKMPLELDDEFYNNFREYFSSRPEVIFLTRSMHKDAAENYDKQFIDLYEKTRKRLELRSSPQINQILRCTSNTNATSSEIQLRNRQAVIVSNFREPDRRLGRYSKYYYHHNVGPEVYSRKVFVGGLPSCVKESDILNFFSRYGRLQVDWPSKHYECKSDSDPSLCNEPISSSSYQPSSHLAMVSPPFGEINPFMRNMPAQSESSQTGGFGRISSGSIGGFLNPGMAQVARGNLGFGSTKSDGSINGDKRQHHLGYVFLLFEKERSVRDLVLDCFEEEEGLFITLESSTDSIRVQIRPWLLADAEFLMDFNVPINTKLVAFIGGVPRPLKAVELAHFFEQTYGHVVCVGIDIDNKFKYPRGSGRVAFSDYDAYVQAITDRYIVLDHEDIHKRVEIKPYFFHNQSCEECSGRYHRQHAPYFCPSLECFQYYCEPCWHKMHSHPSRFHHMPVVKGV.

Residues 434–516 (LVAFIGGVPR…KRVEIKPYFF (83 aa)) enclose the RRM domain.

As to expression, expressed specifically in the spermatogenic germ line.

Its function is as follows. Cytoplasmic polyadenylation element binding protein that binds to and regulates the translation of specific mRNAs. Not required for oogenesis. This chain is Cytoplasmic polyadenylation element-binding protein 2 (cpb-2), found in Caenorhabditis elegans.